Here is a 450-residue protein sequence, read N- to C-terminus: UDP-N-acetylmuramoylalanine--D-glutamate ligase (450 aa).

118–124 (GSNGKTT) contacts ATP.

This sequence belongs to the MurCDEF family.

It is found in the cytoplasm. The enzyme catalyses UDP-N-acetyl-alpha-D-muramoyl-L-alanine + D-glutamate + ATP = UDP-N-acetyl-alpha-D-muramoyl-L-alanyl-D-glutamate + ADP + phosphate + H(+). The protein operates within cell wall biogenesis; peptidoglycan biosynthesis. In terms of biological role, cell wall formation. Catalyzes the addition of glutamate to the nucleotide precursor UDP-N-acetylmuramoyl-L-alanine (UMA). The protein is UDP-N-acetylmuramoylalanine--D-glutamate ligase of Halalkalibacterium halodurans (strain ATCC BAA-125 / DSM 18197 / FERM 7344 / JCM 9153 / C-125) (Bacillus halodurans).